A 1467-amino-acid polypeptide reads, in one-letter code: MYSSSNSFLGGVNNARPGQPPFMQQPPYSQLPQGQQQIPQQTGFQPQPTGYGSQSASHLQPQPTGFPTGQLQPQFTGFPGAAPPQQQQQFGGYQAPAQQPQLTGYPPQSQPPSLQVPSTTGLPTRLAPRTSSEIANSFSDGAGVAPPPPPKSSGSKIPNIRLSFITAQDQAKFEQLFKSAVGDSQTMDGEKAKELLLRSRLPGSELSKIWVLSDTTKSGQLFFPEFALAMYLCNLRITGRELPSTLPDKIKNEVSGMVDIISFGVPDTEPQGAARTNVPSFDAPLLENKSAPPAPQHPKPQQPSNAQFLSQLAAQPTGFGPQATGLQPNQPSLLGANATLAPQTTGFPGQSQQQYLHSQPTGLMTNPQATGYNGPRPPLPPMPTGFGSNLSSMQTGGLAAQPTGIPGQWGFVNAPSSGLPNIEALKQQLMPQPGREGGFTTAGLSGNASIPWAITKEEKKIYDDLFRAWDGLHKGFIGGDTAIEIMGQSGLDRKDLERIWTLADPSNRGRLNMDEFAVAMHLIYRKLNGYPVPNRLPPELIPPSTRNLNDSIGAVKSLLSQDAESRKASGAFLQPQKTGVSYLKEHSFRGGARSPGFGRKDATLFKNNDEAAAGYRSSARRRVGNDARPSSPPTSQASEEELSVEQLKKKIRETQIMLDAVDFKDENRAEEDEVLDRRDRLEAESLMDRTRRVQDDIDTHPNAVFRKLDNGAERRSLRRQLQAFEDQVPQIASEVRRIEREIADAKLELFRLKDAKAHPNSAANIVGTGPGGTVTEADRIKARARARMQARAAELAGRPVPASVDDDGAAVRRLEAESASIRADREKNEAMTRDVEESVREFTRSLEDSLKEEGETSTREHERRRWEDALGVEDVIRDFIYDLQRGSRTAHIRKEEESRASAQEQRLRHEEPSPGVSRLSPAPSAGSAGSLPGSTHEDRVAAARERAQRRIAERMAAAGLKPHTDTSETLLQRQEREKREREERLRRAEEEDAKREQERQRRLAEEQRSTSDTPAKPVGKKPPPAPPSRRGRTDSAGQAEVKKAAEETITAEQAAREQAIREEQQAQEEETNRLEMEAQKREEELLKEKEAQEARLRALEEQVRQGKIRKQEEKRRKEEAERLAKEKEAALAAQRAEIERAKERERQLQLELERLDEESSSDDEGPVNITPEDSTPTQSQLLPTVTPAAPVSAPESEQAGSPEDTSSQAPPVDFKLETESKNPYFKITHQATDTQVVSSPPVPQPSFTSPKADVHSTNPFHRLAKQETSKPAFTGSAPLERKSRARPEADDDWSAAGSEFDSSDDDDDERPGGGSAKQLASILFGTMAPPRPLSAMDDKSPSKSSTPVQDSPVASLPVPESNGSLSAPAAPPPPPPPPPAAVPSYDPSVAPPPPPAPPMAPPAPPPGPPPPPGPLPPPAPPAASGPPTPAGAPDRSALLASIQKGKGLRKVQTNDRSTSSIAGRVLD.

Residues 1 to 157 (MYSSSNSFLG…PPPKSSGSKI (157 aa)) are disordered. Positions 25-48 (QPPYSQLPQGQQQIPQQTGFQPQP) are enriched in low complexity. Positions 50–75 (GYGSQSASHLQPQPTGFPTGQLQPQF) are enriched in polar residues. Low complexity predominate over residues 77-101 (GFPGAAPPQQQQQFGGYQAPAQQPQ). The segment covering 129–139 (RTSSEIANSFS) has biased composition (polar residues). Residues 169–257 (DQAKFEQLFK…DKIKNEVSGM (89 aa)) enclose the EH 1 domain. In terms of domain architecture, EF-hand 1 spans 201 to 236 (LPGSELSKIWVLSDTTKSGQLFFPEFALAMYLCNLR). Residues 266–376 (PDTEPQGAAR…PQATGYNGPR (111 aa)) form a disordered region. The span at 292–301 (PPAPQHPKPQ) shows a compositional bias: pro residues. 2 stretches are compositionally biased toward polar residues: residues 305 to 314 (NAQFLSQLAA) and 340 to 370 (LAPQ…PQAT). In terms of domain architecture, EH 2 spans 458 to 547 (EKKIYDDLFR…PELIPPSTRN (90 aa)). The 36-residue stretch at 491 to 526 (LDRKDLERIWTLADPSNRGRLNMDEFAVAMHLIYRK) folds into the EF-hand 2 domain. Disordered regions lie at residues 613-643 (AGYR…EELS), 822-864 (RADR…HERR), 888-1087 (RTAH…ELLK), and 1101-1467 (EQVR…RVLD). The stretch at 634 to 758 (TSQASEEELS…LFRLKDAKAH (125 aa)) forms a coiled coil. The segment covering 892-912 (IRKEEESRASAQEQRLRHEEP) has biased composition (basic and acidic residues). Residues 919-934 (LSPAPSAGSAGSLPGS) are compositionally biased toward low complexity. Composition is skewed to basic and acidic residues over residues 935–953 (THED…RIAE), 973–1009 (RQER…EQRS), 1054–1087 (AARE…ELLK), 1101–1129 (EQVR…EKEA), and 1136–1153 (AEIE…LELE). The stretch at 965-1162 (DTSETLLQRQ…ERLDEESSSD (198 aa)) forms a coiled coil. Positions 1154-1165 (RLDEESSSDDEG) are enriched in acidic residues. The segment covering 1171-1182 (PEDSTPTQSQLL) has biased composition (polar residues). The segment covering 1183-1197 (PTVTPAAPVSAPESE) has biased composition (low complexity). A compositionally biased stretch (basic and acidic residues) spans 1279–1288 (LERKSRARPE). 2 stretches are compositionally biased toward pro residues: residues 1369-1381 (AAPP…PPAA) and 1389-1430 (VAPP…PTPA). Residues 1434–1451 (DRSALLASIQKGKGLRKV) form the WH2 domain.

This sequence belongs to the PAN1 family. Component of the PAN1 actin cytoskeleton-regulatory complex.

It is found in the cell membrane. Its subcellular location is the endosome membrane. It localises to the cytoplasm. The protein localises to the cytoskeleton. The protein resides in the actin patch. Component of the PAN1 actin cytoskeleton-regulatory complex required for the internalization of endosomes during actin-coupled endocytosis. The complex links the site of endocytosis to the cell membrane-associated actin cytoskeleton. Mediates uptake of external molecules and vacuolar degradation of plasma membrane proteins. Plays a role in the proper organization of the cell membrane-associated actin cytoskeleton and promotes its destabilization. The sequence is that of Actin cytoskeleton-regulatory complex protein pan1 (pan1) from Aspergillus fumigatus (strain ATCC MYA-4609 / CBS 101355 / FGSC A1100 / Af293) (Neosartorya fumigata).